The primary structure comprises 412 residues: O-acetyl-L-homoserine sulfhydrylase 2 (412 aa).

Residue K202 is modified to N6-(pyridoxal phosphate)lysine.

This sequence belongs to the trans-sulfuration enzymes family. Homotetramer. It depends on pyridoxal 5'-phosphate as a cofactor.

The catalysed reaction is O-acetyl-L-homoserine + hydrogen sulfide = L-homocysteine + acetate. With respect to regulation, inhibited by the carbonyl reagents hydroxylamine and phenylhydrazine. Also inhibited by methionine and propargylglycine. In terms of biological role, catalyzes the conversion of O-acetyl-L-homoserine (OAH) into homocysteine in the methionine biosynthesis pathway. Has weak activity with O-acetyl-L-serine, O-phospho-L-serine, L-serine, O-succinyl-L-homoserine and L-homoserine. Shows a very low CTT gamma-synthase activity. The chain is O-acetyl-L-homoserine sulfhydrylase 2 from Thermus thermophilus (strain ATCC 27634 / DSM 579 / HB8).